The chain runs to 277 residues: MTLQIDRYAVFGNPIGHSKSPFIHTLFARQTNQSLVYTAETAPVDGFVEAAKAFFADDGKGCNVTVPFKEDAYRFANRLTERAELAGAVNTLKKLDDGEIIGDNTDGEGLVQDLLQHQVVLEGARILVIGAGGAARGVIKPLLDQKPSSLTITNRTFSKAQQLADLFVSHGPIVAKEMTTIEEAYDVIINSTSASLNGELPAVSSAIFSTNSTSYDMMYGKGLTSFNQWAKEHGAAHAYDGLGMLVGQAAESFMLWRGLRPGAKQILRELRKNLEGQ.

Residues 18-20 (SKS) and T65 contribute to the shikimate site. K69 (proton acceptor) is an active-site residue. E81 serves as a coordination point for NADP(+). Shikimate-binding residues include N90 and D106. NADP(+)-binding positions include 130-134 (GAGGA), 154-159 (NRTFSK), and M217. Shikimate is bound at residue Y219. G241 is an NADP(+) binding site.

The protein belongs to the shikimate dehydrogenase family. In terms of assembly, homodimer.

The enzyme catalyses shikimate + NADP(+) = 3-dehydroshikimate + NADPH + H(+). It participates in metabolic intermediate biosynthesis; chorismate biosynthesis; chorismate from D-erythrose 4-phosphate and phosphoenolpyruvate: step 4/7. In terms of biological role, involved in the biosynthesis of the chorismate, which leads to the biosynthesis of aromatic amino acids. Catalyzes the reversible NADPH linked reduction of 3-dehydroshikimate (DHSA) to yield shikimate (SA). This chain is Shikimate dehydrogenase (NADP(+)), found in Vibrio campbellii (strain ATCC BAA-1116).